The sequence spans 417 residues: Tyrosine--tRNA ligase (417 aa).

Residue Y39 coordinates L-tyrosine. Positions 44-53 (PTASSLHAGS) match the 'HIGH' region motif. L-tyrosine-binding residues include Y176 and Q180. The short motif at 236 to 240 (KMGKS) is the 'KMSKS' region element. ATP is bound at residue K239. Positions 350-417 (TGLLILLVQA…KKKHVLIKPL (68 aa)) constitute an S4 RNA-binding domain.

Belongs to the class-I aminoacyl-tRNA synthetase family. TyrS type 1 subfamily. As to quaternary structure, homodimer.

The protein localises to the cytoplasm. The catalysed reaction is tRNA(Tyr) + L-tyrosine + ATP = L-tyrosyl-tRNA(Tyr) + AMP + diphosphate + H(+). Its function is as follows. Catalyzes the attachment of tyrosine to tRNA(Tyr) in a two-step reaction: tyrosine is first activated by ATP to form Tyr-AMP and then transferred to the acceptor end of tRNA(Tyr). The polypeptide is Tyrosine--tRNA ligase (Bartonella henselae (strain ATCC 49882 / DSM 28221 / CCUG 30454 / Houston 1) (Rochalimaea henselae)).